Consider the following 100-residue polypeptide: MAKKSMIARDVKRKKLVERYATKRKKLLDEFNSAKDPMERLEIHRKIQALPRNSAPSRMRNRCWATGKPRGVYRDFGLCRNQLRERAHKGELPGVVKSSW.

It belongs to the universal ribosomal protein uS14 family. In terms of assembly, part of the 30S ribosomal subunit. Contacts proteins S3 and S10.

Binds 16S rRNA, required for the assembly of 30S particles and may also be responsible for determining the conformation of the 16S rRNA at the A site. The protein is Small ribosomal subunit protein uS14 of Prochlorococcus marinus (strain MIT 9211).